Reading from the N-terminus, the 83-residue chain is Small ribosomal subunit protein eS21 (83 aa).

Belongs to the eukaryotic ribosomal protein eS21 family. As to quaternary structure, component of the 40S small ribosomal subunit.

Its subcellular location is the cytoplasm. It localises to the cytosol. The protein resides in the rough endoplasmic reticulum. Functionally, component of the small ribosomal subunit. The ribosome is a large ribonucleoprotein complex responsible for the synthesis of proteins in the cell. The protein is Small ribosomal subunit protein eS21 (rps21) of Xenopus laevis (African clawed frog).